The following is a 158-amino-acid chain: Ribosome maturation factor RimP (158 aa).

It belongs to the RimP family.

It localises to the cytoplasm. In terms of biological role, required for maturation of 30S ribosomal subunits. This chain is Ribosome maturation factor RimP, found in Pseudomonas fluorescens (strain ATCC BAA-477 / NRRL B-23932 / Pf-5).